Reading from the N-terminus, the 801-residue chain is Phenylalanine--tRNA ligase beta subunit (801 aa).

A tRNA-binding domain is found at 39 to 153; the sequence is AEGLSKLVVG…DEAVPGDAIF (115 aa). The 76-residue stretch at 406 to 481 folds into the B5 domain; it reads TEPVEVSTNL…RIYGYDKLPT (76 aa). Residues Asp-459, Asp-465, Glu-468, and Glu-469 each coordinate Mg(2+). The 94-residue stretch at 708 to 801 folds into the FDX-ACB domain; sequence TKFPAMTRDI…LTEQVGAEVR (94 aa).

It belongs to the phenylalanyl-tRNA synthetase beta subunit family. Type 1 subfamily. In terms of assembly, tetramer of two alpha and two beta subunits. Mg(2+) is required as a cofactor.

Its subcellular location is the cytoplasm. The catalysed reaction is tRNA(Phe) + L-phenylalanine + ATP = L-phenylalanyl-tRNA(Phe) + AMP + diphosphate + H(+). The protein is Phenylalanine--tRNA ligase beta subunit of Streptococcus pyogenes serotype M3 (strain SSI-1).